A 119-amino-acid chain; its full sequence is Large ribosomal subunit protein uL24 (119 aa).

It belongs to the universal ribosomal protein uL24 family. As to quaternary structure, part of the 50S ribosomal subunit.

One of two assembly initiator proteins, it binds directly to the 5'-end of the 23S rRNA, where it nucleates assembly of the 50S subunit. In terms of biological role, one of the proteins that surrounds the polypeptide exit tunnel on the outside of the subunit. The chain is Large ribosomal subunit protein uL24 from Paenarthrobacter aurescens (strain TC1).